An 845-amino-acid polypeptide reads, in one-letter code: MPSALAIFTCRPNSHPFQERHVYLDEPIKIGRSVARCRPAQNNATFDCKVLSRNHALVWFDHKTSKFYLQDTKSSNGTFINSQRLSRGSEESPPCEILSGDIIQFGVDVTENTRKVTHGCIVSTIKLFLPDGMEARLRSDVIHAPLPSPVDKVAANTPSMYSQELFQLSQYLQEALHREQMLEQKLATLQRLLAITQEASDTSWQALIDEDRLLSRLEVMGNQLQACSKNQTEDSLRKELIALQEDKHSYETTAKESLRRVLQEKIEVVRKLSEVERSLSNTEDECTHLKEMNERTQEELRELANKYNGAVNEIKDLSDKLKVAEGKQEEIQQKGQAEKKELQTKIDEMEEKEQELQAKIEALQADNDFTNERLTALQVRLEHLQEKTLKECSSLGIQVDDFLPKINGSTEKEHLLSKSGGDCTFIHQFLECQKKLMVQGHLTKVVEESKLSKENQAKAKESDLSDTLSPSKEKSSDDTTDAQMDEQDLNEPLAKVSLLKDDLQGTQSETEAKQDIQHLRKELVEAQELARTSKQKCFELQALLEEERKAYRNQVEESAKQIQVLQVQLQKLHMDMENLQEEKDTEISSTRDKLLSAQDEILLLRQAAAEAVSERDTDFVSLQEELKKVRAELEGWRKAASEYENEIRSLQSSFQLRCQQCEDQQREEATRLQGELEKLKKEWDVLETECHSLKKENVLLSSELQRQEKELHNSQKQSFELTSDLSILQMTRKELEKQVGSLKEQHLRDAADLKTLLSKAENQAKDVQKEYEKTQTVLSELKLKFEMTEQEKQSITDELKQCKDNLKLLREKGNNKPWPWMPMLAALVAVTAMVLYVPGLARASP.

Residues 1 to 163 (MPSALAIFTC…AANTPSMYSQ (163 aa)) form a necessary for targeting to centrosomes region. Topologically, residues 1–819 (MPSALAIFTC…REKGNNKPWP (819 aa)) are cytoplasmic. The region spanning 28-85 (IKIGRSVARCRPAQNNATFDCKVLSRNHALVWFDHKTSKFYLQDTKSSNGTFINSQRL) is the FHA domain. A helical; Anchor for type IV membrane protein transmembrane segment spans residues 28–85 (IKIGRSVARCRPAQNNATFDCKVLSRNHALVWFDHKTSKFYLQDTKSSNGTFINSQRL). Ser148 is modified (phosphoserine). Coiled coils occupy residues 167 to 202 (QLSQ…ASDT) and 231 to 388 (QTED…QEKT). The chain crosses the membrane as a helical; Anchor for type IV membrane protein span at residues 339 to 359 (KKELQTKIDEMEEKEQELQAK). Basic and acidic residues predominate over residues 451–463 (LSKENQAKAKESD). Positions 451–484 (LSKENQAKAKESDLSDTLSPSKEKSSDDTTDAQM) are disordered. Phosphoserine occurs at positions 465 and 469. Residues 506–816 (TQSETEAKQD…KLLREKGNNK (311 aa)) are a coiled coil. Residues 820-840 (WMPMLAALVAVTAMVLYVPGL) form a helical; Anchor for type IV membrane protein membrane-spanning segment. Residues 841 to 845 (ARASP) lie on the Extracellular side of the membrane.

The protein belongs to the SLMAP family. In terms of assembly, homodimer. Interacts with myosin. Interacts with SIKE1 and both associate with the STRIPAK core complex composed of PP2A catalytic and scaffolding subunits, the striatins (PP2A regulatory subunits), the striatin-associated proteins MOB4, STRIP1 and STRIP2, PDCD10 and members of the STE20 kinases, such as STK24 and STK26. Interacts (via FHA domain) with STK3 (when phosphorylated); the interaction associates STK3 with the STRIPAK complex. Expressed in proliferating myoblasts and differentiated myotubes (at protein level). Expressed in myoblasts, cardiac and skeletal muscles.

The protein resides in the cell membrane. It localises to the sarcolemma. The protein localises to the cytoplasm. Its subcellular location is the myofibril. It is found in the sarcomere. The protein resides in the m line. It localises to the z line. The protein localises to the cytoskeleton. Its subcellular location is the microtubule organizing center. It is found in the centrosome. The protein resides in the endoplasmic reticulum membrane. It localises to the mitochondrion membrane. Functionally, associates with the striatin-interacting phosphatase and kinase (STRIPAK) core complex, forming the extended (SIKE1:SLMAP)STRIPAK complex. The (SIKE1:SLMAP)STRIPAK complex dephosphorylates STK3 leading to the inhibition of Hippo signaling and the control of cell growth. May play a role during myoblast fusion. This chain is Sarcolemmal membrane-associated protein (Slmap), found in Mus musculus (Mouse).